We begin with the raw amino-acid sequence, 459 residues long: MAP kinase-interacting serine/threonine-protein kinase 2 (459 aa).

Residues 28–67 are disordered; that stretch reads LDPAQHGDSDFSPQCEARPDMPSSQPIDIPDAKKRGRKKK. Residues 60–66 carry the Nuclear localization signal motif; it reads KKRGRKK. Residue serine 74 is modified to Phosphoserine. Positions 84-368 constitute a Protein kinase domain; that stretch reads QLQEDVLGEG…AAQVLQHPWV (285 aa). ATP is bound by residues 90–98 and lysine 113; that span reads LGEGAHARV. 160–162 contributes to the staurosporine binding site; it reads EKM. Aspartate 205 serves as the catalytic Proton acceptor. Residue glutamate 209 participates in staurosporine binding. Phosphothreonine is present on residues threonine 244 and threonine 249. Zn(2+) contacts are provided by cysteine 299, cysteine 311, and cysteine 314. Threonine 379 is subject to Phosphothreonine. Serine 431 and serine 434 each carry phosphoserine. The MAP kinase binding signature appears at 438–442; it reads LAQRR. Serine 446 bears the Phosphoserine mark. A Phosphothreonine modification is found at threonine 450.

The protein belongs to the protein kinase superfamily. CAMK Ser/Thr protein kinase family. In terms of assembly, monomer. Interacts with the C-terminal regions of EIF4G1 and EIF4G2; this interaction is promoted when MAPK pathways are repressed but repressed upon ERK proteins activation. Also binds to dephosphorylated MAPK3/ERK1 and MAPK1/ER2K. Interaction with phosphorylated MAPK3/ERK1 and MAPK1/ER2K protects it from dephosphorylation and inactivation. Interacts with ESR2 and EIF4E in the nucleus. The cofactor is Mg(2+). Requires Zn(2+) as cofactor. Dual phosphorylation of Thr-244 and Thr-249 activates the kinase. Phosphorylation of Thr-379 activates the kinase. Phosphorylated upon arsenic trioxide As(2)O(3) treatment. Phosphorylated by MAPK1/ERK2, MAPK11 and MAPK14. Dephosphorylated by PP2A.

The protein resides in the cytoplasm. Its subcellular location is the nucleus. The protein localises to the PML body. The catalysed reaction is L-seryl-[protein] + ATP = O-phospho-L-seryl-[protein] + ADP + H(+). It catalyses the reaction L-threonyl-[protein] + ATP = O-phospho-L-threonyl-[protein] + ADP + H(+). With respect to regulation, inhibited by CGP57380 and staurosporine. Serine/threonine-protein kinase that phosphorylates SFPQ/PSF, HNRNPA1 and EIF4E. May play a role in the response to environmental stress and cytokines. Appears to regulate translation by phosphorylating EIF4E, thus increasing the affinity of this protein for the 7-methylguanosine-containing mRNA cap. Required for mediating PP2A-inhibition-induced EIF4E phosphorylation. Triggers EIF4E shuttling from cytoplasm to nucleus. Enhances the formation of EIF4F complex in pachytene spermatocytes, thus promoting mRNA translation during spermatogenesis. Displays a high basal kinase activity. Acts as a mediator of the suppressive effects of IFNgamma on hematopoiesis. Negative regulator for signals that control generation of arsenic trioxide As(2)O(3)-dependent apoptosis and anti-leukemic responses. Involved in anti-apoptotic signaling in response to serum withdrawal. The protein is MAP kinase-interacting serine/threonine-protein kinase 2 (Mknk2) of Rattus norvegicus (Rat).